A 552-amino-acid polypeptide reads, in one-letter code: MSDNAKHHRDGHLVASGLQDRAARTPQHEGFLGPDRPWHLSFSLLLAGSFVLFSWWAFDYAGSGANKVILVLATVVGMFMAFNVGGNDVANSFGTSVGAGTLTMKQALLVAAIFEVSGAVIAGGDVTETIRSGIVDLSGVSVDPRDFMNIMLSALSAAALWLLFANRMGYPVSTTHSIIGGIVGAAIALGMVSGQGGAALRMVQWDQIGQIVVSWVLSPVLGGLVSYLLYGVIKRHILLYNEQAERRLTEIKKERIAHRERHKAAFDRLTEIQQIAYTGALARDAVAANRKDFDPDELESDYYRELHEIDAKTSSVDAFRALQNWVPLVAAAGSMIIVAMLLFKGFKHMHLGLTTMNNYFIIAMVGAAVWMATFIFAKTLRGESLSRSTFLMFSWMQVFTASGFAFSHGSNDIANAIGPFAAILDVLRTGAIEGNAAVPAAAMVTFGVALCAGLWFIGRRVIATVGHNLTTMHPASGFAAELSAAGVVMGATVLGLPVSSTHILIGAVLGVGIVNRSTNWGLMKPIVLAWVITLPSAAILASVGLVALRAIF.

13 consecutive transmembrane segments (helical) span residues Trp-38–Phe-58, Ile-69–Val-89, Ala-107–Thr-127, Asp-146–Asn-166, Ile-178–Ala-198, Val-213–Ile-233, Val-326–Phe-346, Phe-360–Leu-380, Thr-389–Gly-409, Ala-437–Ile-457, Met-472–Thr-492, Val-493–Ile-513, and Ile-526–Val-546.

It belongs to the inorganic phosphate transporter (PiT) (TC 2.A.20) family.

It localises to the cell membrane. Potential transporter for phosphate. The polypeptide is Putative phosphate permease MT2339 (Mycobacterium tuberculosis (strain CDC 1551 / Oshkosh)).